Here is a 110-residue protein sequence, read N- to C-terminus: Large ribosomal subunit protein uL24 (110 aa).

The protein belongs to the universal ribosomal protein uL24 family. Part of the 50S ribosomal subunit.

Its function is as follows. One of two assembly initiator proteins, it binds directly to the 5'-end of the 23S rRNA, where it nucleates assembly of the 50S subunit. In terms of biological role, one of the proteins that surrounds the polypeptide exit tunnel on the outside of the subunit. The chain is Large ribosomal subunit protein uL24 from Ureaplasma parvum serovar 3 (strain ATCC 27815 / 27 / NCTC 11736).